The sequence spans 338 residues: Anthranilate phosphoribosyltransferase (338 aa).

5-phospho-alpha-D-ribose 1-diphosphate contacts are provided by residues G81, 84–85 (GD), S89, 91–94 (NIST), 109–117 (KHGNRSVSS), and S121. G81 contacts anthranilate. Residue S93 participates in Mg(2+) binding. An anthranilate-binding site is contributed by N112. R167 lines the anthranilate pocket. Residues D226 and E227 each coordinate Mg(2+).

Belongs to the anthranilate phosphoribosyltransferase family. As to quaternary structure, homodimer. It depends on Mg(2+) as a cofactor.

The enzyme catalyses N-(5-phospho-beta-D-ribosyl)anthranilate + diphosphate = 5-phospho-alpha-D-ribose 1-diphosphate + anthranilate. Its pathway is amino-acid biosynthesis; L-tryptophan biosynthesis; L-tryptophan from chorismate: step 2/5. Its function is as follows. Catalyzes the transfer of the phosphoribosyl group of 5-phosphorylribose-1-pyrophosphate (PRPP) to anthranilate to yield N-(5'-phosphoribosyl)-anthranilate (PRA). This is Anthranilate phosphoribosyltransferase from Thioalkalivibrio sulfidiphilus (strain HL-EbGR7).